Reading from the N-terminus, the 72-residue chain is Neuropeptide SIFamide (72 aa).

Residues 1–26 form the signal peptide; the sequence is MALRFTLTLLLVTILVAAILLGSSEA. N-linked (GlcNAc...) asparagine glycosylation is present at N34. F38 carries the phenylalanine amide modification. Positions 42-72 are excised as a propeptide; it reads NSLDYDSAKMSAVCEVAMEACPMWFPQNDSK.

Belongs to the FARP (FMRFamide related peptide) family. Strongly expressed in two pairs of neurons in the pars intercerebralis (at protein level).

It is found in the secreted. Its function is as follows. Ligand for the neuropeptide SIFamide receptor. Modulates sexual behavior by negatively regulating female receptivity to male courtship and by playing a role in male sex discrimination. Also involved in promoting sleep. This is Neuropeptide SIFamide from Drosophila melanogaster (Fruit fly).